A 296-amino-acid polypeptide reads, in one-letter code: MPYDSVYSEKRPPGTLRTAWRKFYSDAPAMVGLYGCAGLALLCIFGGWIAPYGIDQQFLGYQLLPPSWSRYGEVSFFLGTDDLGRDVLSRLLSGAAPTVGGAFIVTLAATLCGLVLGVVAGATHGLRSAVLNHILDTLLSIPSLLLAIIVVAFAGPHLSHAMFAVWLALLPRMVRSVYSMVHDELEKEYVIAARLDGATTLNILWFAILPNITAGLVTEITRALSMAILDIAALGFLDLGAQLPSPEWGAMLGDALELIYVAPWTVMLPGAAITLSVLLVNLLGDGIRRAIIAGVE.

Over 1–28 (MPYDSVYSEKRPPGTLRTAWRKFYSDAP) the chain is Cytoplasmic. A helical transmembrane segment spans residues 29-49 (AMVGLYGCAGLALLCIFGGWI). Residues 50-98 (APYGIDQQFLGYQLLPPSWSRYGEVSFFLGTDDLGRDVLSRLLSGAAPT) are Periplasmic-facing. Residues 99 to 119 (VGGAFIVTLAATLCGLVLGVV) form a helical membrane-spanning segment. One can recognise an ABC transmembrane type-1 domain in the interval 99-284 (VGGAFIVTLA…LSVLLVNLLG (186 aa)). Topologically, residues 120–133 (AGATHGLRSAVLNH) are cytoplasmic. A helical membrane pass occupies residues 134-154 (ILDTLLSIPSLLLAIIVVAFA). Over 155 to 196 (GPHLSHAMFAVWLALLPRMVRSVYSMVHDELEKEYVIAARLD) the chain is Periplasmic. A helical membrane pass occupies residues 197 to 217 (GATTLNILWFAILPNITAGLV). Residues 218–222 (TEITR) lie on the Cytoplasmic side of the membrane. The helical transmembrane segment at 223–243 (ALSMAILDIAALGFLDLGAQL) threads the bilayer. The Periplasmic segment spans residues 244 to 257 (PSPEWGAMLGDALE). A helical transmembrane segment spans residues 258–278 (LIYVAPWTVMLPGAAITLSVL). The Cytoplasmic segment spans residues 279–296 (LVNLLGDGIRRAIIAGVE).

This sequence belongs to the binding-protein-dependent transport system permease family. OppBC subfamily.

It is found in the cell inner membrane. In terms of biological role, involved in a peptide intake transport system that plays a role in the resistance to antimicrobial peptides. This Salmonella typhi protein is Peptide transport system permease protein SapC (sapC).